The sequence spans 642 residues: Nucleolar GTP-binding protein 1 (642 aa).

Residues 168 to 340 form the OBG-type G domain; sequence RTLLICGYPN…VRNKACEKLL (173 aa). Residues 174–181, 220–224, and 288–291 each bind GTP; these read GYPNVGKS, DTPGI, and NKTD. The tract at residues 585–642 is disordered; sequence MDGVADASMRSKADRMAKLHRRERNRQARQGEADRHATASLPKHLFSGKRGIGSNDRR. Residues 609 to 621 are compositionally biased toward basic and acidic residues; sequence NRQARQGEADRHA.

The protein belongs to the TRAFAC class OBG-HflX-like GTPase superfamily. OBG GTPase family. NOG subfamily.

The protein resides in the nucleus. It is found in the nucleolus. In terms of biological role, involved in the biogenesis of the 60S ribosomal subunit. The sequence is that of Nucleolar GTP-binding protein 1 (NOG1) from Eremothecium gossypii (strain ATCC 10895 / CBS 109.51 / FGSC 9923 / NRRL Y-1056) (Yeast).